We begin with the raw amino-acid sequence, 609 residues long: Myoneurin (609 aa).

Residues 24-89 (CDCTILIGDF…IYSGNLNYDS (66 aa)) enclose the BTB domain. Short sequence motifs (nuclear localization signal) lie at residues 172-188 (KKSQ…RSHQ) and 257-262 (QKPAKL). 8 consecutive C2H2-type zinc fingers follow at residues 301–323 (PVCN…MRIH), 329–351 (YVCH…VRTH), 357–380 (YQCK…RMHH), 386–408 (YKCD…ARKH), 414–436 (YVCD…VRRH), 442–464 (YVCD…ARKH), 470–492 (YICG…FRSH), and 498–521 (FVCE…LKMH). The tract at residues 528–553 (IEMKSAENSSSSEDSTTKSPEPESLE) is disordered. Over residues 533–546 (AENSSSSEDSTTKS) the composition is skewed to low complexity.

The protein resides in the nucleus. This chain is Myoneurin (mynn), found in Xenopus laevis (African clawed frog).